We begin with the raw amino-acid sequence, 334 residues long: MTKVVVCALYKFVSLPHFESIRAPLLAMMEQAEIKGTLLLASEGINGTVAGTQEAIEALLLWLNSQNGLDNIVHKLSFDDEMPFYRTKVKLKNEIVTMGVEGIDPLKVVGTYVKPQDWNALISDPDVILVDTRNDYEVQIGTFKNAVNPVTETFREFPEYVKQNLDPAKHKKVAMFCTGGIRCEKSTAYLKEQGFDEVYHLEGGILKYLEEVKAEESLWEGECFVFDNRVAVNHDLKKGQYDQCNACRMPITEAEKQSPAYVQGVSCPHCIDKISDEQRKRFVERERQVNLAKARNEAHIGSDVNQVIEARREKKEAQRRLAAEKNNAKKSQVL.

One can recognise a Rhodanese domain in the interval 123-217; sequence SDPDVILVDT…YLEEVKAEES (95 aa). Cysteine 177 functions as the Cysteine persulfide intermediate in the catalytic mechanism.

It belongs to the TrhO family.

The enzyme catalyses uridine(34) in tRNA + AH2 + O2 = 5-hydroxyuridine(34) in tRNA + A + H2O. Catalyzes oxygen-dependent 5-hydroxyuridine (ho5U) modification at position 34 in tRNAs. The polypeptide is tRNA uridine(34) hydroxylase (Shewanella baltica (strain OS185)).